Consider the following 125-residue polypeptide: Cyclin-dependent protein kinase inhibitor SMR16 (125 aa).

Its function is as follows. Probable cyclin-dependent protein kinase (CDK) inhibitor that functions as a repressor of mitosis in the endoreduplication cell cycle. The sequence is that of Cyclin-dependent protein kinase inhibitor SMR16 from Arabidopsis thaliana (Mouse-ear cress).